Reading from the N-terminus, the 444-residue chain is tRNA-2-methylthio-N(6)-dimethylallyladenosine synthase (444 aa).

Positions 6 to 124 (KTFKIITYGC…LPQLIEEIKA (119 aa)) constitute an MTTase N-terminal domain. The [4Fe-4S] cluster site is built by Cys15, Cys51, Cys85, Cys161, Cys165, and Cys168. In terms of domain architecture, Radical SAM core spans 147–377 (RARGAQAFVT…MELQNSISLA (231 aa)). The TRAM domain occupies 380–443 (EALVGQEVEV…TWLLKGEMVD (64 aa)).

It belongs to the methylthiotransferase family. MiaB subfamily. Monomer. [4Fe-4S] cluster is required as a cofactor.

It is found in the cytoplasm. It catalyses the reaction N(6)-dimethylallyladenosine(37) in tRNA + (sulfur carrier)-SH + AH2 + 2 S-adenosyl-L-methionine = 2-methylsulfanyl-N(6)-dimethylallyladenosine(37) in tRNA + (sulfur carrier)-H + 5'-deoxyadenosine + L-methionine + A + S-adenosyl-L-homocysteine + 2 H(+). Functionally, catalyzes the methylthiolation of N6-(dimethylallyl)adenosine (i(6)A), leading to the formation of 2-methylthio-N6-(dimethylallyl)adenosine (ms(2)i(6)A) at position 37 in tRNAs that read codons beginning with uridine. The sequence is that of tRNA-2-methylthio-N(6)-dimethylallyladenosine synthase from Moorella thermoacetica (strain ATCC 39073 / JCM 9320).